The sequence spans 263 residues: Protein M1627_2099 (263 aa).

This sequence belongs to the CinA family.

The chain is Protein M1627_2099 from Saccharolobus islandicus (strain M.16.27) (Sulfolobus islandicus).